Consider the following 270-residue polypeptide: LIM zinc-binding domain-containing Nebulette (270 aa).

The region spanning 3-63 is the LIM zinc-binding domain; it reads PQCARCGKVV…NAHYPKQSFT (61 aa). One copy of the Nebulin 1 repeat lies at 61 to 95; it reads SFTTVADTPENLRLKQQSELQSQVKYKRDFEESKG. At Arg96 the chain carries Omega-N-methylarginine. Residues 97 to 131 form a Nebulin 2 repeat; that stretch reads GFSIVTDTPELQRLKRTQEQISNVKYHEDFEKTKG. Arg132 carries the post-translational modification Omega-N-methylarginine. One copy of the Nebulin 3 repeat lies at 133 to 159; the sequence is GFTPVVDDPVTERVRKSTQVVSDAAYK. Thr135 is modified (phosphothreonine). Residues 210–270 form the SH3 domain; it reads AHLRTYRAMY…LPANYIEFVN (61 aa). At Ser230 the chain carries Phosphoserine.

It is found in the cytoplasm. In terms of biological role, binds to actin and plays an important role in the assembly of the Z-disk. Isoform 2 might play a role in the assembly of focal adhesion. This chain is LIM zinc-binding domain-containing Nebulette (Nebl), found in Mus musculus (Mouse).